The following is a 500-amino-acid chain: Probable cardiolipin synthase YwiE (500 aa).

3 helical membrane-spanning segments follow: residues 6-26 (LEFF…FFPV), 31-51 (FYGG…SLIL), and 59-79 (TLLW…FYLF). 2 PLD phosphodiesterase domains span residues 237–264 (LNFR…GKEY) and 413–440 (QKGF…DMRS). Residues His242, Lys244, Asp249, His418, Lys420, and Asp425 contribute to the active site.

The protein belongs to the phospholipase D family. Cardiolipin synthase subfamily.

It localises to the cell membrane. It catalyses the reaction 2 a 1,2-diacyl-sn-glycero-3-phospho-(1'-sn-glycerol) = a cardiolipin + glycerol. Its function is as follows. Catalyzes the reversible phosphatidyl group transfer from one phosphatidylglycerol molecule to another to form cardiolipin (CL) (diphosphatidylglycerol) and glycerol. May have a role in the heat shock response since the level of the transcript of ywiE increases after a heat shock. The polypeptide is Probable cardiolipin synthase YwiE (ywiE) (Bacillus subtilis (strain 168)).